Reading from the N-terminus, the 213-residue chain is Orotate phosphoribosyltransferase (213 aa).

Residue Lys-26 participates in 5-phospho-alpha-D-ribose 1-diphosphate binding. 34–35 is a binding site for orotate; sequence FF. 5-phospho-alpha-D-ribose 1-diphosphate contacts are provided by residues 72-73, Arg-99, Lys-100, Lys-103, His-105, and 124-132; these read YK and DDVITAGTA. Orotate-binding residues include Thr-128 and Arg-156.

This sequence belongs to the purine/pyrimidine phosphoribosyltransferase family. PyrE subfamily. As to quaternary structure, homodimer. It depends on Mg(2+) as a cofactor.

The catalysed reaction is orotidine 5'-phosphate + diphosphate = orotate + 5-phospho-alpha-D-ribose 1-diphosphate. It participates in pyrimidine metabolism; UMP biosynthesis via de novo pathway; UMP from orotate: step 1/2. In terms of biological role, catalyzes the transfer of a ribosyl phosphate group from 5-phosphoribose 1-diphosphate to orotate, leading to the formation of orotidine monophosphate (OMP). The sequence is that of Orotate phosphoribosyltransferase from Klebsiella pneumoniae subsp. pneumoniae (strain ATCC 700721 / MGH 78578).